The chain runs to 325 residues: RNA ligase 1 (325 aa).

Mg(2+) is required as a cofactor. Mn(2+) serves as cofactor. AMPylates itself (auto-AMPylation).

The enzyme catalyses ATP + (ribonucleotide)n-3'-hydroxyl + 5'-phospho-(ribonucleotide)m = (ribonucleotide)n+m + AMP + diphosphate.. In terms of biological role, functions as an RNA ligase, in vitro. The ligation reaction entails three nucleotidyl transfer steps. In the first step, the RNA ligase reacts with ATP in the absence of nucleic acid to form a covalent ligase-AMP intermediate and release pyrophosphate. In step 2, the ligase-AMP binds to the nucleic acid and transfers the adenylate to the 5'-PO4 terminus to form an adenylylated intermediate. In step 3, the RNA ligase directs the attack of the 3'-OH on the 5'-phosphoanhydride linkage, resulting in a repaired 3'-5' phosphodiester and release of AMP. Exhibits selectivity for single-stranded RNA substrates and may not have nick-sealing activity on double-stranded DNA-RNA hybrids. May play a role in maintaining RNA integrity under stress conditions, for example in response to reactive oxygen species (ROS). This Danio rerio (Zebrafish) protein is RNA ligase 1.